The following is a 388-amino-acid chain: MTNSPIADLVHHPERVQSPSLVNSKMNGDAKAVTEWTEPGPAAFDFRSDTVTRPTEQMLAAIAATTLQDDDFRQDPTTLGLEAWMAELTGKAAGLFVVSGTMGNQLGVRAHLQSPPHSVLCDARSHLVTHEAGGVASLSGAMVSCVTPVNGRYMTQADLEAHVNRGTLITDCPTRLVVLEIPLGGVILPLDKCRRISEWARAQGIALHLDGARLWEAVAAGAGSLRDYCACFDSVSLCFSKGLGAPIGSVLVGSETLRERARWIRKSIGGGMRQAGVVCAAARVAVEATFLGGLLKRSHARARDIATFWEIHGGRLTYPTETNMVWLDLEAVGWTPERLIRRGAELGLRFMGARLVVHYQIGDEAIGRLQDLMLEILVSGLVDHPRDS.

Lys-241 is subject to N6-(pyridoxal phosphate)lysine.

The protein belongs to the threonine aldolase family. Pyridoxal 5'-phosphate is required as a cofactor.

It participates in secondary metabolite biosynthesis; terpenoid biosynthesis. Its function is as follows. Aldolase; part of the gene cluster that mediates the biosynthesis of viridicatumtoxin, a tetracycline-like fungal meroterpenoid with a unique, fused spirobicyclic ring system. The first step of the pathway is the production of the malonamoyl-CoA starter unit for the polyketide synthase vrtA. The aldolase vrtJ may be involved in the synthesis of the malonamate substrate for malonamoyl-CoA synthetase vrtB. The polyketide synthase vrtA then may utilize the malonamoyl-CoA starter unit, followed by sequential condensation of eight malonyl-CoA units to form the polyketide backbone. The cyclization of the last ring could be mediated by the lactamase-like protein vrtG. The proposed post-PKS tailoring steps are a hydroxylation at C5 catalyzed the cytochrome P450 monooxygenase vrtE, a hydroxylation at C12a catalyzed by VrtH and/or VrtI, and an O-methylation by the O-methyltransferase vrtF. VrtC is then proposed to catalyze the transfer of a geranyl group synthesized by vrtD to the aromatic C ring of the tetracyclic polyketide intermediate of viridicatumtoxin to yield previridicatumtoxin. Finally, the cytochrome P450 monooxygenase vrtK catalyzes the spirocyclization of the geranyl moiety of previridicatumtoxin to afford viridicatumtoxin. This is Aldolase vrtJ from Penicillium aethiopicum.